Consider the following 248-residue polypeptide: 1-(5-phosphoribosyl)-5-[(5-phosphoribosylamino)methylideneamino] imidazole-4-carboxamide isomerase (248 aa).

Residue Asp8 is the Proton acceptor of the active site. The Proton donor role is filled by Asp129.

The protein belongs to the HisA/HisF family.

Its subcellular location is the cytoplasm. The enzyme catalyses 1-(5-phospho-beta-D-ribosyl)-5-[(5-phospho-beta-D-ribosylamino)methylideneamino]imidazole-4-carboxamide = 5-[(5-phospho-1-deoxy-D-ribulos-1-ylimino)methylamino]-1-(5-phospho-beta-D-ribosyl)imidazole-4-carboxamide. It participates in amino-acid biosynthesis; L-histidine biosynthesis; L-histidine from 5-phospho-alpha-D-ribose 1-diphosphate: step 4/9. The protein is 1-(5-phosphoribosyl)-5-[(5-phosphoribosylamino)methylideneamino] imidazole-4-carboxamide isomerase of Rhizobium johnstonii (strain DSM 114642 / LMG 32736 / 3841) (Rhizobium leguminosarum bv. viciae).